Here is a 91-residue protein sequence, read N- to C-terminus: Small ribosomal subunit protein bS18 (91 aa).

It belongs to the bacterial ribosomal protein bS18 family. As to quaternary structure, part of the 30S ribosomal subunit. Forms a tight heterodimer with protein bS6.

Functionally, binds as a heterodimer with protein bS6 to the central domain of the 16S rRNA, where it helps stabilize the platform of the 30S subunit. The sequence is that of Small ribosomal subunit protein bS18 from Paraburkholderia phytofirmans (strain DSM 17436 / LMG 22146 / PsJN) (Burkholderia phytofirmans).